Consider the following 688-residue polypeptide: Potassium-transporting ATPase ATP-binding subunit (688 aa).

4 consecutive transmembrane segments (helical) span residues 35–55 (VMFVVYLGSGLTTILWIAMLA), 62–82 (ALFTGNIALWLWFTVLFANFA), 219–239 (IALTILLTALTIIFLLVCVTL), and 260–280 (VLIALLVCLIPTTIGGLLSAI). Asp-313 serves as the catalytic 4-aspartylphosphate intermediate. ATP-binding positions include Asp-350, Glu-354, 383 to 390 (FSAMTRMS), and Lys-401. Residues Asp-524 and Asp-528 each coordinate Mg(2+). The next 3 membrane-spanning stretches (helical) occupy residues 594 to 614 (FAIIPAAFAVTYPQLNILNIM), 622 to 642 (AVLSTVIFNALIIVFLIPLAL), and 667 to 687 (GLIAPFIGIKLIDLLLTLLIL).

The protein belongs to the cation transport ATPase (P-type) (TC 3.A.3) family. Type IA subfamily. The system is composed of three essential subunits: KdpA, KdpB and KdpC.

It localises to the cell inner membrane. The catalysed reaction is K(+)(out) + ATP + H2O = K(+)(in) + ADP + phosphate + H(+). Its function is as follows. Part of the high-affinity ATP-driven potassium transport (or Kdp) system, which catalyzes the hydrolysis of ATP coupled with the electrogenic transport of potassium into the cytoplasm. This subunit is responsible for energy coupling to the transport system and for the release of the potassium ions to the cytoplasm. The chain is Potassium-transporting ATPase ATP-binding subunit from Photorhabdus laumondii subsp. laumondii (strain DSM 15139 / CIP 105565 / TT01) (Photorhabdus luminescens subsp. laumondii).